Here is a 101-residue protein sequence, read N- to C-terminus: Apolipoprotein C-III (101 aa).

The first 20 residues, 1–20 (MQPRMLLIVALVALLASARA), serve as a signal peptide directing secretion. Residue Met-64 is modified to Methionine sulfoxide. The lipid-binding stretch occupies residues 69 to 101 (KSLKGYWSKFTDKFTGLWESGPEDQLTTPTLEP). The O-linked (GalNAc...) threonine glycan is linked to Thr-96.

The protein belongs to the apolipoprotein C3 family. Post-translationally, the most abundant glycoforms are characterized by an O-linked disaccharide galactose linked to N-acetylgalactosamine (Gal-GalNAc), further modified with up to 3 sialic acid residues. Less abundant glycoforms are characterized by more complex and fucosylated glycan moieties. O-glycosylated on Thr-96 with a core 1 or possibly core 8 glycan. Synthesized predominantly in liver and to a lesser degree in intestine.

It is found in the secreted. Functionally, component of triglyceride-rich very low density lipoproteins (VLDL) and high density lipoproteins (HDL) in plasma. Plays a multifaceted role in triglyceride homeostasis. Intracellularly, promotes hepatic very low density lipoprotein 1 (VLDL1) assembly and secretion; extracellularly, attenuates hydrolysis and clearance of triglyceride-rich lipoproteins (TRLs). Impairs the lipolysis of TRLs by inhibiting lipoprotein lipase and the hepatic uptake of TRLs by remnant receptors. Formed of several curved helices connected via semiflexible hinges, so that it can wrap tightly around the curved micelle surface and easily adapt to the different diameters of its natural binding partners. This is Apolipoprotein C-III (Apoc3) from Rattus norvegicus (Rat).